The following is a 366-amino-acid chain: UDP-N-acetylenolpyruvoylglucosamine reductase (366 aa).

In terms of domain architecture, FAD-binding PCMH-type spans 29-203 (VGPVARTLVT…LEVEFALDAS (175 aa)). The active site involves Arg177. The Proton donor role is filled by Ser258. Glu358 is a catalytic residue.

Belongs to the MurB family. FAD serves as cofactor.

The protein resides in the cytoplasm. It catalyses the reaction UDP-N-acetyl-alpha-D-muramate + NADP(+) = UDP-N-acetyl-3-O-(1-carboxyvinyl)-alpha-D-glucosamine + NADPH + H(+). It participates in cell wall biogenesis; peptidoglycan biosynthesis. Functionally, cell wall formation. The polypeptide is UDP-N-acetylenolpyruvoylglucosamine reductase (Mycobacterium ulcerans (strain Agy99)).